A 98-amino-acid chain; its full sequence is UPF0473 protein GTNG_2486 (98 aa).

The protein belongs to the UPF0473 family.

This is UPF0473 protein GTNG_2486 from Geobacillus thermodenitrificans (strain NG80-2).